A 438-amino-acid chain; its full sequence is Terminase, large subunit (438 aa).

The Walker A motif motif lies at 62-68 (SRRVGKS). A Walker B motif motif is present at residues 150 to 155 (FIIFDE). The active-site For ATPase activity is E155. The Mg(2+) site is built by D286, D342, and D418.

The protein belongs to the Tequatrovirus large terminase family. As to quaternary structure, interacts with the terminase small subunit; the active complex is probably heterooligomeric. Interacts with the portal protein. The cofactor is Mg(2+).

Its function is as follows. The terminase large subunit acts as an ATP driven molecular motor necessary for viral DNA translocation into empty capsids and as an endonuclease that cuts the viral genome to initiate and to end a packaging reaction The terminase lies at a unique vertex of the procapsid and is composed of two subunits, a small terminase subunit involved in viral DNA recognition (packaging sequence), and a large terminase subunit possessing endonucleolytic and ATPase activities. Both terminase subunits heterooligomerize and are docked on the portal protein to form the packaging machine. The terminase large subunit exhibits endonuclease activity and cleaves the viral genome concatemer. Direct long terminal repeats at each end of the genome are duplicated in concert with packaging. Once the capsid is packaged with the DNA, the terminase complex is substituted by the tail. In Escherichia phage T5 (Enterobacteria phage T5), this protein is Terminase, large subunit.